A 705-amino-acid polypeptide reads, in one-letter code: Effector protein AvrPphDPsv (705 aa).

Residues methionine 1–proline 15 show a composition bias toward polar residues. Disordered stretches follow at residues methionine 1 to serine 40 and arginine 175 to serine 205.

Its subcellular location is the secreted. Functionally, effector protein involved in non-host recognition. This chain is Effector protein AvrPphDPsv (avrPphDPsv), found in Pseudomonas savastanoi (Pseudomonas syringae pv. savastanoi).